A 154-amino-acid chain; its full sequence is MQGNQAVVDYMNELLSGELAARDQYFIHSRLYSEWGYTKLFERLNHEMEEETTHAEDFIRRILMLGGTPKMARAELNIGTDVVSCLKADLQTEYEVRDALKKGIKLCEEAQDYVTRDLMVAQLKDTEEDHAHWLEQQLRLIELIGEGNYYQSQL.

In terms of domain architecture, Ferritin-like diiron spans 1–145 (MQGNQAVVDY…QQLRLIELIG (145 aa)). 6 residues coordinate Fe cation: E18, E51, H54, E93, E127, and H130.

It belongs to the bacterioferritin family. As to quaternary structure, forms a bacterioferritin (BFR) complex with BfrB. Heterooligomer of 24 subunits, arranged as 12 dimers, that are packed together to form an approximately spherical molecule with a central cavity, in which large amounts of iron can be deposited.

The protein resides in the cytoplasm. The enzyme catalyses 4 Fe(2+) + O2 + 4 H(+) = 4 Fe(3+) + 2 H2O. It catalyses the reaction Fe(2+)(in) = Fe(2+)(out). Iron-storage protein. Its ferroxidase center binds Fe(2+), oxidizes it using dioxygen to Fe(3+), and participates in the subsequent Fe(3+) oxide mineral core formation within the central cavity of the BFR protein shell. Plays a role in protection against iron-mediated oxidative stress. This chain is Bacterial ferritin, found in Neisseria gonorrhoeae.